Consider the following 341-residue polypeptide: MATIYYDKDANLDLLKKRKVAIIGYGSQGHAHALNLRDSGVDVRVGLAAGSKSKAKAEGAGLRVLSVAEASKEADVIMVLIPDQTQKKVYDEEIAPHLSKGKALLFAHGFNIHFVQVRPPPDVDVLLVAPKGPGHMVRRQYQDGRGIPGLVAVHQDATGQAKAVGLAYARGIGCTRAGVLETTFKEETETDLFGEQAVLCGGAAALVKNGFEVLVEAGYQPESAYFECLHELKLIVDLMYEGGLAWMRHSISDTAEYGDYTRGPRVVDGRSKDEMRKILKEIQGGHFAKEFILENQAGGPTMARYRAAEAAHPIEEVGKRLRDMMSWIREAKKDSSDPGSR.

The 182-residue stretch at 1-182 (MATIYYDKDA…GCTRAGVLET (182 aa)) folds into the KARI N-terminal Rossmann domain. NADP(+) contacts are provided by residues 25–28 (YGSQ), Ser51, Ser53, and 83–86 (DQTQ). His108 is an active-site residue. NADP(+) is bound at residue Gly134. The KARI C-terminal knotted domain occupies 183–328 (TFKEETETDL…KRLRDMMSWI (146 aa)). Residues Asp191, Glu195, Glu227, and Glu231 each coordinate Mg(2+). Ser252 contacts substrate.

This sequence belongs to the ketol-acid reductoisomerase family. Mg(2+) serves as cofactor.

It catalyses the reaction (2R)-2,3-dihydroxy-3-methylbutanoate + NADP(+) = (2S)-2-acetolactate + NADPH + H(+). The catalysed reaction is (2R,3R)-2,3-dihydroxy-3-methylpentanoate + NADP(+) = (S)-2-ethyl-2-hydroxy-3-oxobutanoate + NADPH + H(+). The protein operates within amino-acid biosynthesis; L-isoleucine biosynthesis; L-isoleucine from 2-oxobutanoate: step 2/4. It participates in amino-acid biosynthesis; L-valine biosynthesis; L-valine from pyruvate: step 2/4. Involved in the biosynthesis of branched-chain amino acids (BCAA). Catalyzes an alkyl-migration followed by a ketol-acid reduction of (S)-2-acetolactate (S2AL) to yield (R)-2,3-dihydroxy-isovalerate. In the isomerase reaction, S2AL is rearranged via a Mg-dependent methyl migration to produce 3-hydroxy-3-methyl-2-ketobutyrate (HMKB). In the reductase reaction, this 2-ketoacid undergoes a metal-dependent reduction by NADPH to yield (R)-2,3-dihydroxy-isovalerate. In Anaeromyxobacter dehalogenans (strain 2CP-C), this protein is Ketol-acid reductoisomerase (NADP(+)).